We begin with the raw amino-acid sequence, 130 residues long: Small ribosomal subunit protein uS9 (130 aa).

Positions 105 to 130 (TRDSRMKERKKPGLKGARRAPQFSKR) are disordered. Residues 111 to 130 (KERKKPGLKGARRAPQFSKR) are compositionally biased toward basic residues.

Belongs to the universal ribosomal protein uS9 family.

This is Small ribosomal subunit protein uS9 from Listeria welshimeri serovar 6b (strain ATCC 35897 / DSM 20650 / CCUG 15529 / CIP 8149 / NCTC 11857 / SLCC 5334 / V8).